Here is a 136-residue protein sequence, read N- to C-terminus: Large ribosomal subunit protein uL16c (136 aa).

It belongs to the universal ribosomal protein uL16 family. As to quaternary structure, part of the 50S ribosomal subunit.

The protein resides in the plastid. Its subcellular location is the chloroplast. This is Large ribosomal subunit protein uL16c from Phaseolus angularis (Azuki bean).